The chain runs to 438 residues: 23S rRNA (uracil(1939)-C(5))-methyltransferase RlmD (438 aa).

The TRAM domain occupies 10-68 (KTKNVQTITADILDLDYQGLGVAKINGKTWFIENALPHEKVECRILEDKRQYGHAIVKK). [4Fe-4S] cluster is bound by residues Cys81, Cys87, Cys90, and Cys168. S-adenosyl-L-methionine is bound by residues Gln271, Phe300, Asn305, Glu321, Asp348, and Asp369. Catalysis depends on Cys395, which acts as the Nucleophile.

Belongs to the class I-like SAM-binding methyltransferase superfamily. RNA M5U methyltransferase family. RlmD subfamily.

The enzyme catalyses uridine(1939) in 23S rRNA + S-adenosyl-L-methionine = 5-methyluridine(1939) in 23S rRNA + S-adenosyl-L-homocysteine + H(+). Catalyzes the formation of 5-methyl-uridine at position 1939 (m5U1939) in 23S rRNA. The protein is 23S rRNA (uracil(1939)-C(5))-methyltransferase RlmD of Haemophilus influenzae (strain ATCC 51907 / DSM 11121 / KW20 / Rd).